The chain runs to 254 residues: MTTAFTVVIPSRYASTRLPGKPLQLIGDKPMIQLVWEQACKSSAERVVVATDDPRIIEACQGFGAEAVLTREDHNSGTDRLAEVATKLGLAPDAIVVNVQGDEPLIPPSVIDQVAANLAAHGEARMATLAEPIEDIATLFNPNVVKVVSDINGLALTFSRSTLPWARDAFAKQPDVLPEGVPYRRHIGIYAYRAGFLHDFVSWGPCWLENTESLEQLRALWHGVRIHVGDALEAPPAGVDTPEDLERVRRLLGA.

It belongs to the KdsB family.

It is found in the cytoplasm. The catalysed reaction is 3-deoxy-alpha-D-manno-oct-2-ulosonate + CTP = CMP-3-deoxy-beta-D-manno-octulosonate + diphosphate. Its pathway is nucleotide-sugar biosynthesis; CMP-3-deoxy-D-manno-octulosonate biosynthesis; CMP-3-deoxy-D-manno-octulosonate from 3-deoxy-D-manno-octulosonate and CTP: step 1/1. The protein operates within bacterial outer membrane biogenesis; lipopolysaccharide biosynthesis. Activates KDO (a required 8-carbon sugar) for incorporation into bacterial lipopolysaccharide in Gram-negative bacteria. The chain is 3-deoxy-manno-octulosonate cytidylyltransferase from Pseudomonas fluorescens (strain SBW25).